Here is a 119-residue protein sequence, read N- to C-terminus: Beta-2-microglobulin (119 aa).

A signal peptide spans 1–20 (MARFVVVALLVLLSLSGLEA). Positions 25 to 114 (PKIQVYSRHP…VTFSTPKTVK (90 aa)) constitute an Ig-like C1-type domain. A disulfide bridge links Cys45 with Cys100.

It belongs to the beta-2-microglobulin family. Heterodimer of an alpha chain and a beta chain. Beta-2-microglobulin is the beta-chain of major histocompatibility complex class I molecules.

The protein localises to the secreted. Functionally, component of the class I major histocompatibility complex (MHC). Involved in the presentation of peptide antigens to the immune system. The chain is Beta-2-microglobulin (B2M) from Callimico goeldii (Goeldi's marmoset).